Here is a 334-residue protein sequence, read N- to C-terminus: Procathepsin L (334 aa).

The signal sequence occupies residues 1–17 (MNLLLLLAVLCLGTALA). Residues 18–113 (TPKFDQTFSA…RLFQEPLMLK (96 aa)) constitute a propeptide, activation peptide. Residue glutamate 122 coordinates Zn(2+). Intrachain disulfides connect cysteine 135/cysteine 178 and cysteine 169/cysteine 211. Cysteine 138 is a catalytic residue. Residues glutamate 163, aspartate 184, glutamate 199, and glutamate 205 each coordinate Zn(2+). Asparagine 221 is a glycosylation site (N-linked (GlcNAc...) (high mannose) asparagine). Zn(2+)-binding residues include aspartate 227, aspartate 250, histidine 253, and aspartate 275. Cysteine 269 and cysteine 322 are oxidised to a cystine. Histidine 276 is an active-site residue. The propeptide occupies 289–290 (DS). Residue asparagine 300 is part of the active site.

This sequence belongs to the peptidase C1 family. In terms of assembly, dimer of a heavy and a light chain linked by disulfide bonds. Interacts with Long isoform of CD74/Ii chain; the interaction stabilizes the conformation of mature CTSL. During export along the endocytic pathway, pro-CTSL undergoes several proteolytic cleavages to generate the CTSL single-chain and two-chain mature forms, composed of a heavy chain linked to a light chain by disulfide bonds. Autocleavage; produces the single-chain CTSL after cleavage of the propeptide. The cleavage can be intermolecular. Expressed in thymus, kidney and liver. Expressed in thyroid epithelial cells. Expressed in cortical thymic epithelial cells. Expressed by antigen presenting cells (APCs) such as dendritic cells and macrophages.

The protein localises to the lysosome. It localises to the apical cell membrane. Its subcellular location is the secreted. It is found in the extracellular space. The protein resides in the cytoplasmic vesicle. The protein localises to the secretory vesicle. It localises to the chromaffin granule. The catalysed reaction is Specificity close to that of papain. As compared to cathepsin B, cathepsin L exhibits higher activity toward protein substrates, but has little activity on Z-Arg-Arg-NHMec, and no peptidyl-dipeptidase activity.. Its activity is regulated as follows. Long isoform of CD74/Ii chain stabilizes the conformation of mature CTSL by binding to its active site and serving as a chaperone to help maintain a pool of mature enzyme in endocytic compartments and extracellular space of APCs. IFNG enhances the conversion into the CTSL mature and active form. Inhibited by CST6. Inhibited by the glycopeptide antibiotic teicoplanin. Inhibited by amantadine. Functionally, thiol protease important for the overall degradation of proteins in lysosomes. Involved in the solubilization of cross-linked TG/thyroglobulin and in the subsequent release of thyroid hormone thyroxine (T4) by limited proteolysis of TG/thyroglobulin in the thyroid follicle lumen. In neuroendocrine chromaffin cells secretory vesicles, catalyzes the prohormone proenkephalin processing to the active enkephalin peptide neurotransmitter. In thymus, regulates CD4(+) T cell positive selection by generating the major histocompatibility complex class II (MHCII) bound peptide ligands presented by cortical thymic epithelial cells. Also mediates invariant chain processing in cortical thymic epithelial cells. Major elastin-degrading enzyme at neutral pH. Accumulates as a mature and active enzyme in the extracellular space of antigen presenting cells (APCs) to regulate degradation of the extracellular matrix in the course of inflammation. Secreted form generates endostatin from COL18A1. Critical for cardiac morphology and function. Plays an important role in hair follicle morphogenesis and cycling, as well as epidermal differentiation. Required for maximal stimulation of steroidogenesis by TIMP1. The sequence is that of Procathepsin L from Mus musculus (Mouse).